Consider the following 335-residue polypeptide: SAM pointed domain-containing Ets transcription factor (335 aa).

A compositionally biased stretch (low complexity) spans 1–20 (MGSASPGLSSVSPSHLLLPP). Disordered regions lie at residues 1-25 (MGSA…TVSR) and 75-100 (AKAP…DSQA). One can recognise a PNT domain in the interval 129–213 (EVLKDIETAC…AHLDIWKSAA (85 aa)). The segment at residues 249–332 (IHLWQFLKEL…ISQRLVYQFV (84 aa)) is a DNA-binding region (ETS).

It belongs to the ETS family. In terms of assembly, interacts with the DNA-binding domain of the androgen receptor. Interacts with NKX3-1. In terms of tissue distribution, expressed in a very restricted set of primarily hormone-regulated epithelial tissues with particularly high expression in the prostate gland. Significantly lower expression is seen in other hormone regulated tissues such as mammary gland, salivary gland, and ovary. Expressed in prostate carcinoma cells.

It is found in the nucleus. Its function is as follows. May function as an androgen-independent transactivator of the prostate-specific antigen (PSA) promoter. Binds to 5'-GGAT-3' DNA sequences. May play a role in the regulation of the prostate gland and/or prostate cancer development. Acts as a transcriptional activator for SERPINB5 promoter. This Homo sapiens (Human) protein is SAM pointed domain-containing Ets transcription factor (SPDEF).